The sequence spans 490 residues: Betaine aldehyde dehydrogenase (490 aa).

K(+) contacts are provided by Ile27 and Asp93. 150 to 152 is a binding site for NAD(+); sequence GAW. Catalysis depends on Lys162, which acts as the Charge relay system. An NAD(+)-binding site is contributed by 176–179; sequence KPSE. Val180 lines the K(+) pocket. 230–233 is a binding site for NAD(+); it reads GTDT. Leu246 is a binding site for K(+). Residue Glu252 is the Proton acceptor of the active site. 3 residues coordinate NAD(+): Gly254, Cys286, and Glu387. Residue Cys286 is the Nucleophile of the active site. A Cysteine sulfenic acid (-SOH) modification is found at Cys286. Residues Lys457 and Gly460 each coordinate K(+). The active-site Charge relay system is the Glu464.

Belongs to the aldehyde dehydrogenase family. In terms of assembly, dimer of dimers. Requires K(+) as cofactor.

The catalysed reaction is betaine aldehyde + NAD(+) + H2O = glycine betaine + NADH + 2 H(+). Its pathway is amine and polyamine biosynthesis; betaine biosynthesis via choline pathway; betaine from betaine aldehyde: step 1/1. Functionally, involved in the biosynthesis of the osmoprotectant glycine betaine. Catalyzes the irreversible oxidation of betaine aldehyde to the corresponding acid. This is Betaine aldehyde dehydrogenase from Pseudomonas syringae pv. syringae (strain B728a).